The following is a 200-amino-acid chain: Dephospho-CoA kinase (200 aa).

In terms of domain architecture, DPCK spans 3-200 (KVGLTGGIGS…EELQRRLHSR (198 aa)). Residue 11-16 (GSGKSS) participates in ATP binding.

The protein belongs to the CoaE family.

The protein localises to the cytoplasm. It carries out the reaction 3'-dephospho-CoA + ATP = ADP + CoA + H(+). The protein operates within cofactor biosynthesis; coenzyme A biosynthesis; CoA from (R)-pantothenate: step 5/5. Its function is as follows. Catalyzes the phosphorylation of the 3'-hydroxyl group of dephosphocoenzyme A to form coenzyme A. This is Dephospho-CoA kinase from Thermobifida fusca (strain YX).